Consider the following 403-residue polypeptide: Multifunctional CCA protein (403 aa).

Positions 8 and 11 each coordinate ATP. Residues G8 and R11 each contribute to the CTP site. D21 and D23 together coordinate Mg(2+). The ATP site is built by R91, R137, and R140. CTP contacts are provided by R91, R137, and R140. In terms of domain architecture, HD spans 228 to 329; it reads TGIHTLMVAK…LKVLGLLDVW (102 aa).

The protein belongs to the tRNA nucleotidyltransferase/poly(A) polymerase family. Bacterial CCA-adding enzyme type 1 subfamily. Monomer. Can also form homodimers and oligomers. Requires Mg(2+) as cofactor. It depends on Ni(2+) as a cofactor.

The enzyme catalyses a tRNA precursor + 2 CTP + ATP = a tRNA with a 3' CCA end + 3 diphosphate. It catalyses the reaction a tRNA with a 3' CCA end + 2 CTP + ATP = a tRNA with a 3' CCACCA end + 3 diphosphate. Catalyzes the addition and repair of the essential 3'-terminal CCA sequence in tRNAs without using a nucleic acid template. Adds these three nucleotides in the order of C, C, and A to the tRNA nucleotide-73, using CTP and ATP as substrates and producing inorganic pyrophosphate. tRNA 3'-terminal CCA addition is required both for tRNA processing and repair. Also involved in tRNA surveillance by mediating tandem CCA addition to generate a CCACCA at the 3' terminus of unstable tRNAs. While stable tRNAs receive only 3'-terminal CCA, unstable tRNAs are marked with CCACCA and rapidly degraded. In Vibrio cholerae serotype O1 (strain ATCC 39315 / El Tor Inaba N16961), this protein is Multifunctional CCA protein.